Consider the following 131-residue polypeptide: Small ribosomal subunit protein uS11 (131 aa).

The protein belongs to the universal ribosomal protein uS11 family. In terms of assembly, part of the 30S ribosomal subunit.

Its function is as follows. Located on the platform of the 30S subunit. This Methanospirillum hungatei JF-1 (strain ATCC 27890 / DSM 864 / NBRC 100397 / JF-1) protein is Small ribosomal subunit protein uS11.